Consider the following 394-residue polypeptide: Elongation factor Tu 1 (394 aa).

Residues 10–204 enclose the tr-type G domain; the sequence is KPHVNVGTIG…ALDTYIPEPA (195 aa). The G1 stretch occupies residues 19–26; sequence GHVDHGKT. 19-26 contacts GTP; the sequence is GHVDHGKT. Residue Thr-26 participates in Mg(2+) binding. Residues 60–64 form a G2 region; sequence GITIN. The tract at residues 81–84 is G3; the sequence is DCPG. GTP is bound by residues 81-85 and 136-139; these read DCPGH and NKCD. Residues 136–139 are G4; sequence NKCD. Residues 174 to 176 form a G5 region; the sequence is SAL.

It belongs to the TRAFAC class translation factor GTPase superfamily. Classic translation factor GTPase family. EF-Tu/EF-1A subfamily. As to quaternary structure, monomer.

The protein resides in the cytoplasm. The enzyme catalyses GTP + H2O = GDP + phosphate + H(+). In terms of biological role, GTP hydrolase that promotes the GTP-dependent binding of aminoacyl-tRNA to the A-site of ribosomes during protein biosynthesis. The polypeptide is Elongation factor Tu 1 (Shewanella frigidimarina (strain NCIMB 400)).